Here is a 318-residue protein sequence, read N- to C-terminus: Acetyl-coenzyme A carboxylase carboxyl transferase subunit alpha (318 aa).

In terms of domain architecture, CoA carboxyltransferase C-terminal spans lysine 38 to alanine 292.

Belongs to the AccA family. In terms of assembly, acetyl-CoA carboxylase is a heterohexamer composed of biotin carboxyl carrier protein (AccB), biotin carboxylase (AccC) and two subunits each of ACCase subunit alpha (AccA) and ACCase subunit beta (AccD).

It localises to the cytoplasm. The catalysed reaction is N(6)-carboxybiotinyl-L-lysyl-[protein] + acetyl-CoA = N(6)-biotinyl-L-lysyl-[protein] + malonyl-CoA. It functions in the pathway lipid metabolism; malonyl-CoA biosynthesis; malonyl-CoA from acetyl-CoA: step 1/1. Functionally, component of the acetyl coenzyme A carboxylase (ACC) complex. First, biotin carboxylase catalyzes the carboxylation of biotin on its carrier protein (BCCP) and then the CO(2) group is transferred by the carboxyltransferase to acetyl-CoA to form malonyl-CoA. This is Acetyl-coenzyme A carboxylase carboxyl transferase subunit alpha from Listeria monocytogenes serovar 1/2a (strain ATCC BAA-679 / EGD-e).